The sequence spans 163 residues: Small ribosomal subunit protein uS5 (163 aa).

The S5 DRBM domain occupies 8 to 71; the sequence is LIEKIVYLNR…EKARKEMISV (64 aa).

The protein belongs to the universal ribosomal protein uS5 family. In terms of assembly, part of the 30S ribosomal subunit. Contacts proteins S4 and S8.

In terms of biological role, with S4 and S12 plays an important role in translational accuracy. Its function is as follows. Located at the back of the 30S subunit body where it stabilizes the conformation of the head with respect to the body. The sequence is that of Small ribosomal subunit protein uS5 from Maridesulfovibrio salexigens (strain ATCC 14822 / DSM 2638 / NCIMB 8403 / VKM B-1763) (Desulfovibrio salexigens).